Here is a 318-residue protein sequence, read N- to C-terminus: Acetyl-coenzyme A carboxylase carboxyl transferase subunit alpha (318 aa).

A CoA carboxyltransferase C-terminal domain is found at 39–293 (KLEKKVDKMR…HEALARHLKE (255 aa)).

This sequence belongs to the AccA family. As to quaternary structure, acetyl-CoA carboxylase is a heterohexamer composed of biotin carboxyl carrier protein (AccB), biotin carboxylase (AccC) and two subunits each of ACCase subunit alpha (AccA) and ACCase subunit beta (AccD).

Its subcellular location is the cytoplasm. It catalyses the reaction N(6)-carboxybiotinyl-L-lysyl-[protein] + acetyl-CoA = N(6)-biotinyl-L-lysyl-[protein] + malonyl-CoA. It functions in the pathway lipid metabolism; malonyl-CoA biosynthesis; malonyl-CoA from acetyl-CoA: step 1/1. Its function is as follows. Component of the acetyl coenzyme A carboxylase (ACC) complex. First, biotin carboxylase catalyzes the carboxylation of biotin on its carrier protein (BCCP) and then the CO(2) group is transferred by the carboxyltransferase to acetyl-CoA to form malonyl-CoA. The polypeptide is Acetyl-coenzyme A carboxylase carboxyl transferase subunit alpha (Geobacter metallireducens (strain ATCC 53774 / DSM 7210 / GS-15)).